We begin with the raw amino-acid sequence, 121 residues long: Small ribosomal subunit protein uS13 (121 aa).

Positions 93-121 (RHLPVRGQNTKNNARTRKGPAVSIAGKKK) are disordered.

This sequence belongs to the universal ribosomal protein uS13 family. In terms of assembly, part of the 30S ribosomal subunit. Forms a loose heterodimer with protein S19. Forms two bridges to the 50S subunit in the 70S ribosome.

Located at the top of the head of the 30S subunit, it contacts several helices of the 16S rRNA. In the 70S ribosome it contacts the 23S rRNA (bridge B1a) and protein L5 of the 50S subunit (bridge B1b), connecting the 2 subunits; these bridges are implicated in subunit movement. Contacts the tRNAs in the A and P-sites. In Ligilactobacillus salivarius (strain UCC118) (Lactobacillus salivarius), this protein is Small ribosomal subunit protein uS13.